The chain runs to 402 residues: uncharacterized protein (402 aa).

It to M.genitalium MG148.

This is an uncharacterized protein from Caldicellulosiruptor sp. (strain Rt8B.4).